We begin with the raw amino-acid sequence, 210 residues long: dTTP/UTP pyrophosphatase (210 aa).

D85 acts as the Proton acceptor in catalysis.

It belongs to the Maf family. YhdE subfamily. A divalent metal cation serves as cofactor.

The protein resides in the cytoplasm. The enzyme catalyses dTTP + H2O = dTMP + diphosphate + H(+). It carries out the reaction UTP + H2O = UMP + diphosphate + H(+). Its function is as follows. Nucleoside triphosphate pyrophosphatase that hydrolyzes dTTP and UTP. May have a dual role in cell division arrest and in preventing the incorporation of modified nucleotides into cellular nucleic acids. This is dTTP/UTP pyrophosphatase from Saccharophagus degradans (strain 2-40 / ATCC 43961 / DSM 17024).